Consider the following 344-residue polypeptide: Heat-inducible transcription repressor HrcA (344 aa).

Belongs to the HrcA family.

Negative regulator of class I heat shock genes (grpE-dnaK-dnaJ and groELS operons). Prevents heat-shock induction of these operons. This Streptococcus uberis (strain ATCC BAA-854 / 0140J) protein is Heat-inducible transcription repressor HrcA.